Here is a 173-residue protein sequence, read N- to C-terminus: Large ribosomal subunit protein uL10 (173 aa).

It belongs to the universal ribosomal protein uL10 family. Part of the ribosomal stalk of the 50S ribosomal subunit. The N-terminus interacts with L11 and the large rRNA to form the base of the stalk. The C-terminus forms an elongated spine to which L12 dimers bind in a sequential fashion forming a multimeric L10(L12)X complex.

Its function is as follows. Forms part of the ribosomal stalk, playing a central role in the interaction of the ribosome with GTP-bound translation factors. The protein is Large ribosomal subunit protein uL10 of Bifidobacterium adolescentis (strain ATCC 15703 / DSM 20083 / NCTC 11814 / E194a).